The sequence spans 313 residues: MREKDYVVIIGSANIDVAGYSHESLNYADSNPGKIKFTPGGVGRNIAQNLALLGNKAWLLSAVGSDFYGQSLLTQTNQSGVYVDKCLIVPGENTSSYLSLLDNTGEMLVAINDMNISNAITAEYLAQHGEFIQRAKVIVADCNISEEALAWILDNAANVPVFVDPVSAWKCVKVRDRLNQIHTLKPNRLEAETLSGIALSGREDVAKVAAWFHQHGLNRLVLSMGGDGVYYSDISGESGWSAPIKTNVINVTGAGDAMMAGLASCWVDGMPFAESVRFAQGCSSMALSCEYTNNPDLSIANVISLVENAECLN.

This sequence belongs to the carbohydrate kinase PfkB family.

It carries out the reaction pseudouridine + ATP = psi-UMP + ADP + H(+). Catalyzes the phosphorylation of pseudouridine to pseudouridine 5'-phosphate (PsiMP). The sequence is that of Pseudouridine kinase (psuK) from Escherichia coli (strain K12).